A 197-amino-acid chain; its full sequence is Small ribosomal subunit protein uS4B (197 aa).

Residues 88 to 151 (CRLDNIAYRI…RKNDEFADNF (64 aa)) enclose the S4 RNA-binding domain.

Belongs to the universal ribosomal protein uS4 family. As to quaternary structure, part of the 30S ribosomal subunit. Contacts protein S5. The interaction surface between S4 and S5 is involved in control of translational fidelity.

In terms of biological role, one of the primary rRNA binding proteins, it binds directly to 16S rRNA where it nucleates assembly of the body of the 30S subunit. Its function is as follows. With S5 and S12 plays an important role in translational accuracy. The protein is Small ribosomal subunit protein uS4B of Clostridium botulinum (strain Hall / ATCC 3502 / NCTC 13319 / Type A).